We begin with the raw amino-acid sequence, 230 residues long: 2-C-methyl-D-erythritol 4-phosphate cytidylyltransferase (230 aa).

Belongs to the IspD/TarI cytidylyltransferase family. IspD subfamily.

It carries out the reaction 2-C-methyl-D-erythritol 4-phosphate + CTP + H(+) = 4-CDP-2-C-methyl-D-erythritol + diphosphate. It participates in isoprenoid biosynthesis; isopentenyl diphosphate biosynthesis via DXP pathway; isopentenyl diphosphate from 1-deoxy-D-xylulose 5-phosphate: step 2/6. Functionally, catalyzes the formation of 4-diphosphocytidyl-2-C-methyl-D-erythritol from CTP and 2-C-methyl-D-erythritol 4-phosphate (MEP). The protein is 2-C-methyl-D-erythritol 4-phosphate cytidylyltransferase of Shewanella halifaxensis (strain HAW-EB4).